The following is a 500-amino-acid chain: Protein nucleotidyltransferase YdiU (500 aa).

8 residues coordinate ATP: Gly96, Gly98, Arg99, Lys119, Asp131, Gly132, Arg182, and Arg189. Asp258 functions as the Proton acceptor in the catalytic mechanism. Residues Asn259 and Asp268 each contribute to the Mg(2+) site. Asp268 serves as a coordination point for ATP.

Belongs to the SELO family. Requires Mg(2+) as cofactor. Mn(2+) is required as a cofactor.

The catalysed reaction is L-seryl-[protein] + ATP = 3-O-(5'-adenylyl)-L-seryl-[protein] + diphosphate. The enzyme catalyses L-threonyl-[protein] + ATP = 3-O-(5'-adenylyl)-L-threonyl-[protein] + diphosphate. It carries out the reaction L-tyrosyl-[protein] + ATP = O-(5'-adenylyl)-L-tyrosyl-[protein] + diphosphate. It catalyses the reaction L-histidyl-[protein] + UTP = N(tele)-(5'-uridylyl)-L-histidyl-[protein] + diphosphate. The catalysed reaction is L-seryl-[protein] + UTP = O-(5'-uridylyl)-L-seryl-[protein] + diphosphate. The enzyme catalyses L-tyrosyl-[protein] + UTP = O-(5'-uridylyl)-L-tyrosyl-[protein] + diphosphate. Nucleotidyltransferase involved in the post-translational modification of proteins. It can catalyze the addition of adenosine monophosphate (AMP) or uridine monophosphate (UMP) to a protein, resulting in modifications known as AMPylation and UMPylation. This is Protein nucleotidyltransferase YdiU from Rhizobium johnstonii (strain DSM 114642 / LMG 32736 / 3841) (Rhizobium leguminosarum bv. viciae).